The chain runs to 419 residues: UPF0229 protein TERTU_3150 (419 aa).

Residues 63 to 111 (IFHHGSGGKNNRVLPGNDRFNGGDHIERPEQGQGGGGNGSGASDSGEGE) form a disordered region. Residues 83–92 (NGGDHIERPE) show a composition bias toward basic and acidic residues.

It belongs to the UPF0229 family.

The sequence is that of UPF0229 protein TERTU_3150 from Teredinibacter turnerae (strain ATCC 39867 / T7901).